The sequence spans 639 residues: UvrABC system protein C (639 aa).

The 78-residue stretch at 20–97 (ERSGVYRMFD…IKKFQPKFNI (78 aa)) folds into the GIY-YIG domain. The UVR domain maps to 207–242 (KELQENLSRKMEELSSQMRFEEAAEIRDRIKALSYV).

The protein belongs to the UvrC family. In terms of assembly, interacts with UvrB in an incision complex.

The protein resides in the cytoplasm. Its function is as follows. The UvrABC repair system catalyzes the recognition and processing of DNA lesions. UvrC both incises the 5' and 3' sides of the lesion. The N-terminal half is responsible for the 3' incision and the C-terminal half is responsible for the 5' incision. The protein is UvrABC system protein C of Rickettsia africae (strain ESF-5).